Here is a 567-residue protein sequence, read N- to C-terminus: Phosphoglucomutase-like protein 5 (567 aa).

A disordered region spans residues 1 to 26 (MEGSPIPVLTVPTAPYEDQRPTGGGG). Threonine 120 carries the post-translational modification Phosphothreonine. Serine 122 is subject to Phosphoserine.

It belongs to the phosphohexose mutase family. Interacts with DMD/dystrophin; the interaction is direct. Interacts with UTRN/utrophin.

The protein localises to the cell junction. It localises to the adherens junction. The protein resides in the cytoplasm. Its subcellular location is the cytoskeleton. It is found in the cell membrane. The protein localises to the sarcolemma. Component of adherens-type cell-cell and cell-matrix junctions. Has no phosphoglucomutase activity in vitro. This Rattus norvegicus (Rat) protein is Phosphoglucomutase-like protein 5.